The primary structure comprises 118 residues: Large ribosomal subunit protein uL18 (118 aa).

It belongs to the universal ribosomal protein uL18 family. As to quaternary structure, part of the 50S ribosomal subunit; part of the 5S rRNA/L5/L18/L25 subcomplex. Contacts the 5S and 23S rRNAs.

Its function is as follows. This is one of the proteins that bind and probably mediate the attachment of the 5S RNA into the large ribosomal subunit, where it forms part of the central protuberance. In Lactobacillus acidophilus (strain ATCC 700396 / NCK56 / N2 / NCFM), this protein is Large ribosomal subunit protein uL18.